The following is a 146-amino-acid chain: Hemoglobin subunit beta (146 aa).

V1 carries the post-translational modification N-acetylvaline. The Globin domain maps to 2 to 146 (HLTPEEKNAV…VANALAHKYH (145 aa)). Residue T12 is modified to Phosphothreonine. A Phosphoserine modification is found at S44. Residue K59 is modified to N6-acetyllysine. H63 lines the heme b pocket. K82 is modified (N6-acetyllysine). H92 is a heme b binding site. S-nitrosocysteine is present on C93. K144 is subject to N6-acetyllysine.

It belongs to the globin family. Heterotetramer of two alpha chains and two beta chains. As to expression, red blood cells.

Involved in oxygen transport from the lung to the various peripheral tissues. The sequence is that of Hemoglobin subunit beta (HBB) from Theropithecus gelada (Gelada baboon).